The primary structure comprises 451 residues: Velvet complex subunit 2 (451 aa).

Disordered regions lie at residues 1 to 95 (MNTT…PRSI), 205 to 312 (PGQS…QTNP), and 426 to 451 (PIRK…DDDY). 3 stretches are compositionally biased toward polar residues: residues 18–28 (TMPSLHDTTYR), 40–62 (MPQT…NSLP), and 205–217 (PGQS…SPTY). In terms of domain architecture, Velvet spans 92 to 428 (PRSITVDGRK…ATQGIKIPIR (337 aa)). Over residues 267–283 (PQQSNYYYPQPSQSIPS) the composition is skewed to low complexity. Positions 427–445 (IRKDGKDGPGKGGKDGSRG) are enriched in basic and acidic residues.

This sequence belongs to the velvet family. VelB subfamily. In terms of assembly, component of the heterotrimeric velvet complex composed of LAE1, VEL1 and VEL2; VEL1 acting as a bridging protein between LAE1 and VEL2. Forms a heterodimeric complex with VOS1; the formation of the VEL2-VOS1 complex is light-dependent.

The protein resides in the nucleus. It is found in the cytoplasm. Component of the velvet transcription factor complex that controls sexual/asexual developmental ratio in response to light, promoting sexual development in the darkness while stimulating asexual sporulation under illumination. The velvet complex acts as a global regulator for secondary metabolite gene expression. Component of the VEL2-VOS1 heterodimeric complex that plays a dual role in activating genes associated with spore maturation and repressing certain development-associated genes. The VEL2-VOS1 complex binds DNA through the DNA-binding domain of VOS1 that recognizes an 11-nucleotide consensus sequence 5'-CTGGCCGCGGC-3' consisting of two motifs in the promoters of key developmental regulatory genes. Controls the expression of the oxalic acid and melanin gene clusters. Involved in the resistance to oxidative stress. Required for full virulence. This is Velvet complex subunit 2 from Botryotinia fuckeliana (strain B05.10) (Noble rot fungus).